Reading from the N-terminus, the 232-residue chain is Sensory rhodopsin III (232 aa).

7 helical membrane passes run 5–25, 39–59, 73–93, 100–120, 125–145, 168–188, and 194–214; these read IVWY…FVWF, LPPI…LIAG, FADW…LAGV, LAVA…SMSG, IAFA…IKTF, VVTW…TGII, and NFLV…ILLV. K205 is subject to N6-(retinylidene)lysine.

The protein belongs to the archaeal/bacterial/fungal opsin family. Interacts with HtrM. The covalent binding of retinal to the apoprotein, bacterioopsin, generates bacteriorhodopsin.

It is found in the membrane. Its function is as follows. Sensory rhodopsin. Associates with an unusual transducer lacking a methyl-accepting transducer domain found in all other photosensory transducers. The chromophore is all-trans-retinal in the dark. The polypeptide is Sensory rhodopsin III (xop2) (Haloarcula marismortui (strain ATCC 43049 / DSM 3752 / JCM 8966 / VKM B-1809) (Halobacterium marismortui)).